A 338-amino-acid chain; its full sequence is uncharacterized protein (338 aa).

This sequence belongs to the MG032/MG096/MG288 family.

This is an uncharacterized protein from Mycoplasma pneumoniae (strain ATCC 29342 / M129 / Subtype 1) (Mycoplasmoides pneumoniae).